The sequence spans 368 residues: 1-deoxy-D-xylulose 5-phosphate reductoisomerase (368 aa).

T10, G11, S12, I13, Q38, and N100 together coordinate NADPH. A 1-deoxy-D-xylulose 5-phosphate-binding site is contributed by K101. E102 contacts NADPH. A Mn(2+)-binding site is contributed by D125. 1-deoxy-D-xylulose 5-phosphate contacts are provided by S126, E127, S151, and H172. E127 is a binding site for Mn(2+). Position 178 (G178) interacts with NADPH. 1-deoxy-D-xylulose 5-phosphate is bound by residues S185, N190, K191, and E194. E194 serves as a coordination point for Mn(2+).

It belongs to the DXR family. The cofactor is Mg(2+). Mn(2+) serves as cofactor.

The catalysed reaction is 2-C-methyl-D-erythritol 4-phosphate + NADP(+) = 1-deoxy-D-xylulose 5-phosphate + NADPH + H(+). It participates in isoprenoid biosynthesis; isopentenyl diphosphate biosynthesis via DXP pathway; isopentenyl diphosphate from 1-deoxy-D-xylulose 5-phosphate: step 1/6. Catalyzes the NADPH-dependent rearrangement and reduction of 1-deoxy-D-xylulose-5-phosphate (DXP) to 2-C-methyl-D-erythritol 4-phosphate (MEP). This is 1-deoxy-D-xylulose 5-phosphate reductoisomerase from Tropheryma whipplei (strain Twist) (Whipple's bacillus).